Here is a 155-residue protein sequence, read N- to C-terminus: S-ribosylhomocysteine lyase (155 aa).

Residues histidine 58, histidine 62, and cysteine 125 each coordinate Fe cation.

It belongs to the LuxS family. Homodimer. It depends on Fe cation as a cofactor.

It carries out the reaction S-(5-deoxy-D-ribos-5-yl)-L-homocysteine = (S)-4,5-dihydroxypentane-2,3-dione + L-homocysteine. Functionally, involved in the synthesis of autoinducer 2 (AI-2) which is secreted by bacteria and is used to communicate both the cell density and the metabolic potential of the environment. The regulation of gene expression in response to changes in cell density is called quorum sensing. Catalyzes the transformation of S-ribosylhomocysteine (RHC) to homocysteine (HC) and 4,5-dihydroxy-2,3-pentadione (DPD). In Helicobacter pylori (strain HPAG1), this protein is S-ribosylhomocysteine lyase.